An 861-amino-acid chain; its full sequence is Translation initiation factor IF-2 (861 aa).

Disordered regions lie at residues 1–69 (MSDA…GESA) and 92–273 (ARAR…GREK). The segment covering 53–65 (GGPGGKQGGGAKG) has biased composition (gly residues). Residues 94–108 (ARAEAADREAQKKQD) are compositionally biased toward basic and acidic residues. Low complexity predominate over residues 109–120 (AAAMAQRAASEQ). Composition is skewed to basic and acidic residues over residues 121 to 155 (RQLEEQRERVAREAREAEEAAQKAIEDEARLKAEA) and 163 to 186 (DSGRKRDDESSRRRPPAKDEKRTP). The span at 213-223 (PGPAAKQQPAR) shows a compositional bias: low complexity. Residues 255–273 (RAREREKQRRQDTSGGREK) show a composition bias toward basic and acidic residues. The region spanning 357–527 (PRAPVIAVMG…ALQAELLDLK (171 aa)) is the tr-type G domain. A G1 region spans residues 366-373 (GHVDHGKT). 366 to 373 (GHVDHGKT) lines the GTP pocket. A G2 region spans residues 391-395 (GITQH). Positions 413 to 416 (DTPG) are G3. Residues 413–417 (DTPGH) and 467–470 (NKCD) contribute to the GTP site. The G4 stretch occupies residues 467–470 (NKCD). A G5 region spans residues 503 to 505 (SAK).

It belongs to the TRAFAC class translation factor GTPase superfamily. Classic translation factor GTPase family. IF-2 subfamily.

It localises to the cytoplasm. In terms of biological role, one of the essential components for the initiation of protein synthesis. Protects formylmethionyl-tRNA from spontaneous hydrolysis and promotes its binding to the 30S ribosomal subunits. Also involved in the hydrolysis of GTP during the formation of the 70S ribosomal complex. In Maricaulis maris (strain MCS10) (Caulobacter maris), this protein is Translation initiation factor IF-2.